The chain runs to 669 residues: Trissin receptor (669 aa).

Positions 1-15 (MIMTMMQTVRAWQQE) are enriched in polar residues. The segment at 1 to 90 (MIMTMMQTVR…PTGQQPPRLP (90 aa)) is disordered. Residues 1 to 184 (MIMTMMQTVR…EYIFDRTDVR (184 aa)) are Extracellular-facing. Low complexity predominate over residues 55–74 (NQNNGSPNSSPNQSTSAFRQ). N-linked (GlcNAc...) asparagine glycosylation is present at Asn-66. Over residues 79–89 (HPPTGQQPPRL) the composition is skewed to pro residues. Residues Asn-120 and Asn-130 are each glycosylated (N-linked (GlcNAc...) asparagine). Residues 185–205 (IIFITLYTLVFCCCFFGNLLV) form a helical membrane-spanning segment. Over 206–217 (ILVVTLSRRLRS) the chain is Cytoplasmic. A helical membrane pass occupies residues 218–238 (ITNFFLANLAFADFCVGLFCV). The Extracellular segment spans residues 239–269 (MQNLSIYLIESWVFGEFLCRMYQFVHSLSYT). N-linked (GlcNAc...) asparagine glycosylation occurs at Asn-241. Cys-257 and Cys-340 are joined by a disulfide. A helical membrane pass occupies residues 270–290 (ASIFILVVICMERYFAIVHPI). Residues 291-302 (TCKQILTAARLR) are Cytoplasmic-facing. The chain crosses the membrane as a helical span at residues 303 to 323 (MVIVTVWITSAVYSTPKFVFS). The Extracellular portion of the chain corresponds to 324–350 (KTIKNIHTQDGQEEEICVLDREMFNSK). A helical transmembrane segment spans residues 351–371 (LLDMINFVLLYVMPLLVMTVL). Residues 372-552 (YSKIAIALWR…SSNVLRARRG (181 aa)) are Cytoplasmic-facing. Residues 390–401 (VVQHQHQQPQQP) show a composition bias toward low complexity. Disordered stretches follow at residues 390-481 (VVQH…RGVS) and 515-537 (AHHQ…AGAT). Over residues 414-429 (MYHHHPHHHHHHHQHH) the composition is skewed to basic residues. Residues 441–454 (VGVGLGGGGGGGPG) are compositionally biased toward gly residues. Positions 455-470 (PSLASGGSSTTSLSRK) are enriched in low complexity. Residues 524-534 (SVGGGSGGAGA) are compositionally biased toward gly residues. A helical membrane pass occupies residues 553 to 573 (VVRMLIIFVLTFALCNLPYHA). Residues 574-595 (RKMWQYWSRSYRGDSNFNALLT) lie on the Extracellular side of the membrane. A helical transmembrane segment spans residues 596-616 (PLTFLVTYFNSGVNPLLYAFL). Over 617-669 (SRNFRKGMKELLLCSWKKGKGKSSSNSSMHHKRKALQTHSLPTDTTHIGNEQL) the chain is Cytoplasmic. Residues 635 to 669 (GKGKSSSNSSMHHKRKALQTHSLPTDTTHIGNEQL) form a disordered region. The span at 653–669 (QTHSLPTDTTHIGNEQL) shows a compositional bias: polar residues.

This sequence belongs to the G-protein coupled receptor 1 family.

The protein localises to the cell membrane. Functionally, G-protein coupled receptor which is activated by the Trissin peptide in vitro, leading to increased intracellular calcium ion levels. The protein is Trissin receptor of Drosophila melanogaster (Fruit fly).